The primary structure comprises 318 residues: ADP-L-glycero-D-manno-heptose-6-epimerase (318 aa).

NADP(+) is bound by residues 10-11 (FI), 31-32 (DN), Lys-38, Lys-53, 76-80 (QGACS), and Asn-93. Tyr-141 acts as the Proton acceptor in catalysis. Lys-145 serves as a coordination point for NADP(+). Asn-172 serves as a coordination point for substrate. Val-173 and Lys-181 together coordinate NADP(+). The active-site Proton acceptor is the Lys-181. Substrate contacts are provided by residues Arg-183, His-190, 204–207 (FEGS), Arg-212, and Tyr-276.

Belongs to the NAD(P)-dependent epimerase/dehydratase family. HldD subfamily. As to quaternary structure, homopentamer. NADP(+) serves as cofactor.

It carries out the reaction ADP-D-glycero-beta-D-manno-heptose = ADP-L-glycero-beta-D-manno-heptose. It functions in the pathway nucleotide-sugar biosynthesis; ADP-L-glycero-beta-D-manno-heptose biosynthesis; ADP-L-glycero-beta-D-manno-heptose from D-glycero-beta-D-manno-heptose 7-phosphate: step 4/4. Catalyzes the interconversion between ADP-D-glycero-beta-D-manno-heptose and ADP-L-glycero-beta-D-manno-heptose via an epimerization at carbon 6 of the heptose. This Brachyspira hyodysenteriae (strain ATCC 49526 / WA1) protein is ADP-L-glycero-D-manno-heptose-6-epimerase.